The primary structure comprises 150 residues: Translation machinery-associated protein 17 (150 aa).

Phosphoserine occurs at positions 24 and 68. Residues 110 to 139 (RKTGHGKSKHEVEAKDNTNKGPDVDMDNSN) form a disordered region. The segment covering 118–127 (KHEVEAKDNT) has biased composition (basic and acidic residues).

In terms of assembly, interacts with RPT6. Interacts with the 40S and 60S ribosomal subunits.

The protein resides in the cytoplasm. Its subcellular location is the nucleus. Functionally, ATPase-dedicated chaperone that assists the formation of the RPT6-RPT3 ATPase pair, an early step in proteasome assembly. Plays a key role in maintaining homeostatic proteasome levels and adjusting proteasome assembly when demands increase, such as during proteasome stresses. Function overlaps with RPN14. The polypeptide is Translation machinery-associated protein 17 (TMA17) (Saccharomyces cerevisiae (strain ATCC 204508 / S288c) (Baker's yeast)).